Here is a 185-residue protein sequence, read N- to C-terminus: Elongation factor P (185 aa).

It belongs to the elongation factor P family.

It localises to the cytoplasm. Its pathway is protein biosynthesis; polypeptide chain elongation. Involved in peptide bond synthesis. Stimulates efficient translation and peptide-bond synthesis on native or reconstituted 70S ribosomes in vitro. Probably functions indirectly by altering the affinity of the ribosome for aminoacyl-tRNA, thus increasing their reactivity as acceptors for peptidyl transferase. The chain is Elongation factor P from Clostridium tetani (strain Massachusetts / E88).